Consider the following 282-residue polypeptide: MSWIEKILPRTKSPTKSNVPEGIWTKCGQCDAVLYKTELEKQLGVCPKCNHHMRVSARARLNQFLDQGERTELGSELEPKDLLKFKDSKKYKDRLVAAQKATNEKDALVVMQGKLKGMPVVVAAFEFAFMGGSMASVVGARFVKAVEACLEHNMPLICFSTSGGARMQEALLSLMQMAKTSAALAKMSEKGLPYISVMTDPTMGGVSASLAMLGDVNVAEPRALIGFAGPRVIEQTVRETLPEGFQRSEFLLEKGAIDVIIDRREMRDRLHSMLSKLHHQQA.

The CoA carboxyltransferase N-terminal domain maps to 23-282 (IWTKCGQCDA…MLSKLHHQQA (260 aa)). 4 residues coordinate Zn(2+): cysteine 27, cysteine 30, cysteine 46, and cysteine 49. A C4-type zinc finger spans residues 27–49 (CGQCDAVLYKTELEKQLGVCPKC).

This sequence belongs to the AccD/PCCB family. Acetyl-CoA carboxylase is a heterohexamer composed of biotin carboxyl carrier protein (AccB), biotin carboxylase (AccC) and two subunits each of ACCase subunit alpha (AccA) and ACCase subunit beta (AccD). Requires Zn(2+) as cofactor.

It localises to the cytoplasm. It catalyses the reaction N(6)-carboxybiotinyl-L-lysyl-[protein] + acetyl-CoA = N(6)-biotinyl-L-lysyl-[protein] + malonyl-CoA. It participates in lipid metabolism; malonyl-CoA biosynthesis; malonyl-CoA from acetyl-CoA: step 1/1. Its function is as follows. Component of the acetyl coenzyme A carboxylase (ACC) complex. Biotin carboxylase (BC) catalyzes the carboxylation of biotin on its carrier protein (BCCP) and then the CO(2) group is transferred by the transcarboxylase to acetyl-CoA to form malonyl-CoA. This Pseudoalteromonas atlantica (strain T6c / ATCC BAA-1087) protein is Acetyl-coenzyme A carboxylase carboxyl transferase subunit beta.